The chain runs to 33 residues: Cyanophlyctin-beta (33 aa).

C27 and C33 are disulfide-bonded.

In terms of tissue distribution, expressed by the skin glands.

The protein localises to the secreted. In terms of biological role, antimicrobial peptide active against E.coli (MIC=5 uM), K.pneumoniae (MIC=10 uM), B.cereus (MIC=7 uM) and S.aureus (MIC=12 uM). Has very little hemolytic activity. The polypeptide is Cyanophlyctin-beta (Euphlyctis cyanophlyctis (Skittering frog)).